Here is a 189-residue protein sequence, read N- to C-terminus: Adenylate kinase (189 aa).

11–16 (GSGKGT) is a binding site for ATP. The segment at 31–60 (STGDVLRAEIKKGTELGKTAKGYIDQGQLL) is NMP. AMP contacts are provided by residues Thr-32, Arg-37, 58 to 60 (QLL), 86 to 89 (GFPR), and Gln-93. The interval 127-137 (KRGQESGRADD) is LID. Arg-128 contributes to the ATP binding site. AMP contacts are provided by Arg-134 and Arg-145. Gly-173 lines the ATP pocket.

Belongs to the adenylate kinase family. As to quaternary structure, monomer.

The protein localises to the cytoplasm. The enzyme catalyses AMP + ATP = 2 ADP. The protein operates within purine metabolism; AMP biosynthesis via salvage pathway; AMP from ADP: step 1/1. In terms of biological role, catalyzes the reversible transfer of the terminal phosphate group between ATP and AMP. Plays an important role in cellular energy homeostasis and in adenine nucleotide metabolism. This Phocaeicola vulgatus (strain ATCC 8482 / DSM 1447 / JCM 5826 / CCUG 4940 / NBRC 14291 / NCTC 11154) (Bacteroides vulgatus) protein is Adenylate kinase.